We begin with the raw amino-acid sequence, 251 residues long: Coproheme decarboxylase (251 aa).

Residues Arg133, 147-151, His174, Gln187, and Ser225 each bind Fe-coproporphyrin III; that span reads YPMSK. Tyr147 is an active-site residue.

This sequence belongs to the ChdC family. Type 1 subfamily. In terms of assembly, homopentamer. Homohexamer in solution. The cofactor is Fe-coproporphyrin III.

It carries out the reaction Fe-coproporphyrin III + 2 H2O2 + 2 H(+) = heme b + 2 CO2 + 4 H2O. The enzyme catalyses Fe-coproporphyrin III + H2O2 + H(+) = harderoheme III + CO2 + 2 H2O. It catalyses the reaction harderoheme III + H2O2 + H(+) = heme b + CO2 + 2 H2O. Its pathway is porphyrin-containing compound metabolism; protoheme biosynthesis. Functionally, involved in coproporphyrin-dependent heme b biosynthesis. Catalyzes the decarboxylation of Fe-coproporphyrin III (coproheme) to heme b (protoheme IX), the last step of the pathway. The reaction occurs in a stepwise manner with a three-propionate intermediate. The sequence is that of Coproheme decarboxylase from Listeria monocytogenes serovar 1/2a (strain ATCC BAA-679 / EGD-e).